The following is a 215-amino-acid chain: ATP-dependent dethiobiotin synthetase BioD (215 aa).

ATP is bound at residue 13 to 18 (DIGKTI). Position 17 (Thr17) interacts with Mg(2+). Residue Lys38 is part of the active site. Thr42 is a substrate binding site. Residues Asp50, 115–118 (EGAG), and 175–176 (NH) each bind ATP. Mg(2+) contacts are provided by Asp50 and Glu115.

Belongs to the dethiobiotin synthetase family. As to quaternary structure, homodimer. Mg(2+) serves as cofactor.

It localises to the cytoplasm. It catalyses the reaction (7R,8S)-7,8-diammoniononanoate + CO2 + ATP = (4R,5S)-dethiobiotin + ADP + phosphate + 3 H(+). It participates in cofactor biosynthesis; biotin biosynthesis; biotin from 7,8-diaminononanoate: step 1/2. In terms of biological role, catalyzes a mechanistically unusual reaction, the ATP-dependent insertion of CO2 between the N7 and N8 nitrogen atoms of 7,8-diaminopelargonic acid (DAPA, also called 7,8-diammoniononanoate) to form a ureido ring. The chain is ATP-dependent dethiobiotin synthetase BioD from Neisseria meningitidis serogroup A / serotype 4A (strain DSM 15465 / Z2491).